The following is a 285-amino-acid chain: Phosphatidate cytidylyltransferase (285 aa).

The next 8 helical transmembrane spans lie at 10–30 (FVLI…GFAI), 56–76 (VWLA…LPEY), 93–113 (LGWW…AAIW), 121–141 (LIFG…LRAW), 151–171 (AIWL…AYMF), 190–210 (WQGF…YGMW), 213–233 (LDVA…ASVL), and 264–284 (IDSL…VFRT).

The protein belongs to the CDS family.

The protein resides in the cell inner membrane. The enzyme catalyses a 1,2-diacyl-sn-glycero-3-phosphate + CTP + H(+) = a CDP-1,2-diacyl-sn-glycerol + diphosphate. The protein operates within phospholipid metabolism; CDP-diacylglycerol biosynthesis; CDP-diacylglycerol from sn-glycerol 3-phosphate: step 3/3. This Escherichia coli O157:H7 protein is Phosphatidate cytidylyltransferase (cdsA).